Reading from the N-terminus, the 72-residue chain is Protein CYSTEINE-RICH TRANSMEMBRANE MODULE 9 (72 aa).

A compositionally biased stretch (polar residues) spans M1 to Y22. The disordered stretch occupies residues M1–E46. A helical membrane pass occupies residues S49–C65.

This sequence belongs to the CYSTM1 family. In terms of assembly, heterodimers. Interacts with WIH1/CYSTM13. As to expression, mostly expressed in roots and flowers and, to a lower extent, in stems, siliques and leaves.

Its subcellular location is the cell membrane. It localises to the nucleus. Its function is as follows. Involved in resistance to abiotic stress. This chain is Protein CYSTEINE-RICH TRANSMEMBRANE MODULE 9, found in Arabidopsis thaliana (Mouse-ear cress).